The sequence spans 379 residues: Putative cysteine desulfurase IscS 1 (379 aa).

Pyridoxal 5'-phosphate contacts are provided by residues 71 to 72 (GT), asparagine 151, glutamine 179, and 199 to 201 (SGH). N6-(pyridoxal phosphate)lysine is present on lysine 202. Threonine 237 contributes to the pyridoxal 5'-phosphate binding site. The Cysteine persulfide intermediate role is filled by cysteine 325. A [2Fe-2S] cluster-binding site is contributed by cysteine 325.

Belongs to the class-V pyridoxal-phosphate-dependent aminotransferase family. NifS/IscS subfamily. It depends on pyridoxal 5'-phosphate as a cofactor.

It catalyses the reaction (sulfur carrier)-H + L-cysteine = (sulfur carrier)-SH + L-alanine. Functionally, catalyzes the removal of elemental sulfur from cysteine to produce alanine. This Bacillus subtilis (strain 168) protein is Putative cysteine desulfurase IscS 1 (iscS1).